The following is a 595-amino-acid chain: Outer dynein arm-docking complex subunit 3 (595 aa).

The interval 1-69 is disordered; the sequence is MTSPLCRAAS…RGAGKPSVHS (69 aa). Coiled coils occupy residues 94-327 and 385-473; these read WNIK…REHL and FAQL…ASKL.

Component of the outer dynein arm-docking complex along with ODAD1, ODAD2, ODAD4 and CLXN. Interacts with ODAD1. Interacts with PIERCE1 and PIERCE2; the interactions link the outer dynein arms docking complex (ODA-DC) to the internal microtubule inner proteins (MIP) in cilium axoneme.

It is found in the cytoplasm. The protein localises to the cytoskeleton. It localises to the cilium basal body. The protein resides in the microtubule organizing center. Its subcellular location is the centrosome. It is found in the centriole. The protein localises to the cilium axoneme. In terms of biological role, component of the outer dynein arm-docking complex (ODA-DC) that mediates outer dynein arms (ODA) binding onto the doublet microtubule. Involved in mediating assembly of both ODAs and their axonemal docking complex onto ciliary microtubules. This Homo sapiens (Human) protein is Outer dynein arm-docking complex subunit 3.